The primary structure comprises 122 residues: Ribosome-binding factor A (122 aa).

The protein belongs to the RbfA family. In terms of assembly, monomer. Binds 30S ribosomal subunits, but not 50S ribosomal subunits or 70S ribosomes.

The protein localises to the cytoplasm. In terms of biological role, one of several proteins that assist in the late maturation steps of the functional core of the 30S ribosomal subunit. Associates with free 30S ribosomal subunits (but not with 30S subunits that are part of 70S ribosomes or polysomes). Required for efficient processing of 16S rRNA. May interact with the 5'-terminal helix region of 16S rRNA. The chain is Ribosome-binding factor A from Halothermothrix orenii (strain H 168 / OCM 544 / DSM 9562).